Reading from the N-terminus, the 118-residue chain is Small ribosomal subunit protein uS13 (118 aa).

Positions 94–118 (GLPVRGQRTKTNARTRKGPRKPIKK) are disordered.

It belongs to the universal ribosomal protein uS13 family. In terms of assembly, part of the 30S ribosomal subunit. Forms a loose heterodimer with protein S19. Forms two bridges to the 50S subunit in the 70S ribosome.

Located at the top of the head of the 30S subunit, it contacts several helices of the 16S rRNA. In the 70S ribosome it contacts the 23S rRNA (bridge B1a) and protein L5 of the 50S subunit (bridge B1b), connecting the 2 subunits; these bridges are implicated in subunit movement. Contacts the tRNAs in the A and P-sites. In Shigella dysenteriae serotype 1 (strain Sd197), this protein is Small ribosomal subunit protein uS13.